Here is a 218-residue protein sequence, read N- to C-terminus: ATP phosphoribosyltransferase (218 aa).

Belongs to the ATP phosphoribosyltransferase family. Short subfamily. Heteromultimer composed of HisG and HisZ subunits.

Its subcellular location is the cytoplasm. It carries out the reaction 1-(5-phospho-beta-D-ribosyl)-ATP + diphosphate = 5-phospho-alpha-D-ribose 1-diphosphate + ATP. The protein operates within amino-acid biosynthesis; L-histidine biosynthesis; L-histidine from 5-phospho-alpha-D-ribose 1-diphosphate: step 1/9. Functionally, catalyzes the condensation of ATP and 5-phosphoribose 1-diphosphate to form N'-(5'-phosphoribosyl)-ATP (PR-ATP). Has a crucial role in the pathway because the rate of histidine biosynthesis seems to be controlled primarily by regulation of HisG enzymatic activity. The sequence is that of ATP phosphoribosyltransferase from Lactiplantibacillus plantarum (strain ATCC BAA-793 / NCIMB 8826 / WCFS1) (Lactobacillus plantarum).